The primary structure comprises 127 residues: Small ribosomal subunit protein uS11 (127 aa).

This sequence belongs to the universal ribosomal protein uS11 family. In terms of assembly, part of the 30S ribosomal subunit. Interacts with proteins S7 and S18. Binds to IF-3.

Located on the platform of the 30S subunit, it bridges several disparate RNA helices of the 16S rRNA. Forms part of the Shine-Dalgarno cleft in the 70S ribosome. This is Small ribosomal subunit protein uS11 from Pelodictyon phaeoclathratiforme (strain DSM 5477 / BU-1).